We begin with the raw amino-acid sequence, 372 residues long: Maltose/maltodextrin import ATP-binding protein MalK (372 aa).

Residues 4–234 (VTLKNVCKAY…PQNRFVAGFI (231 aa)) enclose the ABC transporter domain. Residue 36–43 (GPSGCGKS) coordinates ATP.

It belongs to the ABC transporter superfamily. Maltooligosaccharide importer (TC 3.A.1.1.1) family. As to quaternary structure, the complex is composed of two ATP-binding proteins (MalK), two transmembrane proteins (MalG and MalK) and a solute-binding protein (MalE).

Its subcellular location is the cell inner membrane. It carries out the reaction D-maltose(out) + ATP + H2O = D-maltose(in) + ADP + phosphate + H(+). Functionally, part of the ABC transporter complex MalEFGK involved in maltose/maltodextrin import. Responsible for energy coupling to the transport system. The protein is Maltose/maltodextrin import ATP-binding protein MalK of Vibrio parahaemolyticus serotype O3:K6 (strain RIMD 2210633).